The primary structure comprises 337 residues: 4-hydroxythreonine-4-phosphate dehydrogenase (337 aa).

Residues His139 and Thr140 each contribute to the substrate site. Residues His173, His218, and His273 each contribute to the a divalent metal cation site. Residues Lys281, Asn290, and Arg299 each contribute to the substrate site.

It belongs to the PdxA family. As to quaternary structure, homodimer. It depends on Zn(2+) as a cofactor. Requires Mg(2+) as cofactor. Co(2+) serves as cofactor.

It is found in the cytoplasm. It catalyses the reaction 4-(phosphooxy)-L-threonine + NAD(+) = 3-amino-2-oxopropyl phosphate + CO2 + NADH. The protein operates within cofactor biosynthesis; pyridoxine 5'-phosphate biosynthesis; pyridoxine 5'-phosphate from D-erythrose 4-phosphate: step 4/5. Catalyzes the NAD(P)-dependent oxidation of 4-(phosphooxy)-L-threonine (HTP) into 2-amino-3-oxo-4-(phosphooxy)butyric acid which spontaneously decarboxylates to form 3-amino-2-oxopropyl phosphate (AHAP). The polypeptide is 4-hydroxythreonine-4-phosphate dehydrogenase (Rhodopseudomonas palustris (strain ATCC BAA-98 / CGA009)).